The primary structure comprises 377 residues: RNA polymerase sigma factor SigA (377 aa).

Residues 72–92 (EVSNLRQGEDHDGNDNDDFNF) form a disordered region. The segment at 144–214 (LAEANLRLVV…TRAIADQART (71 aa)) is sigma-70 factor domain-2. The short motif at 168–171 (DLIQ) is the Interaction with polymerase core subunit RpoC element. Residues 223–299 (ETINKLIRVS…DQEALTPADA (77 aa)) are sigma-70 factor domain-3. A sigma-70 factor domain-4 region spans residues 312–365 (VLDTLTEREENVLRLRFGLDDGRTRTLEEVGKVFGVTRERIRQIEAKALRKLRH). The H-T-H motif DNA-binding region spans 338–357 (LEEVGKVFGVTRERIRQIEA).

It belongs to the sigma-70 factor family. RpoD/SigA subfamily. In terms of assembly, interacts transiently with the RNA polymerase catalytic core.

The protein localises to the cytoplasm. In terms of biological role, sigma factors are initiation factors that promote the attachment of RNA polymerase to specific initiation sites and are then released. This sigma factor is the primary sigma factor during exponential growth. In Bacillus sp, this protein is RNA polymerase sigma factor SigA.